Consider the following 1217-residue polypeptide: Myosin-5 (1217 aa).

Over residues Met1 to Lys11 the composition is skewed to basic residues. The tract at residues Met1–Ile24 is disordered. One can recognise a Myosin motor domain in the interval Val37–Asp716. ATP is bound at residue Gly130–Thr137. At Ser358 the chain carries Phosphoserine. Residues Ser405–Ser487 are actin-binding. IQ domains lie at His720–Ala740 and Ala741–Ser766. One can recognise a TH1 domain in the interval Lys772–Ala962. 3 disordered regions span residues Val956–Glu1102, Gly1145–Val1174, and Asn1197–Trp1217. Over residues Lys965–Ser974 the composition is skewed to basic residues. Polar residues predominate over residues Gly976 to Thr987. Low complexity predominate over residues Ser994 to Asn1007. Positions Pro1025 to Gln1038 are enriched in pro residues. Positions Pro1050 to Ser1071 are enriched in low complexity. Over residues Ile1072 to Ser1081 the composition is skewed to pro residues. In terms of domain architecture, SH3 spans Thr1083–Gly1145. Over residues Ile1162 to Val1174 the composition is skewed to polar residues. Positions Ser1203 to Trp1217 are enriched in acidic residues.

The protein belongs to the TRAFAC class myosin-kinesin ATPase superfamily. Myosin family. In terms of processing, phosphorylation of the TEDS site (Ser-358) is required for the polarization of the actin cytoskeleton. Phosphorylation probably activates the myosin-I ATPase activity.

The protein resides in the cytoplasm. It is found in the cytoskeleton. Its subcellular location is the actin patch. Functionally, type-I myosin implicated in the organization of the actin cytoskeleton. Required for proper actin cytoskeleton polarization. At the cell cortex, assembles in patch-like structures together with proteins from the actin-polymerizing machinery and promotes actin assembly. Functions as actin nucleation-promoting factor (NPF) for the Arp2/3 complex. This Candida glabrata (strain ATCC 2001 / BCRC 20586 / JCM 3761 / NBRC 0622 / NRRL Y-65 / CBS 138) (Yeast) protein is Myosin-5 (MYO5).